Consider the following 94-residue polypeptide: Co-chaperonin GroES (94 aa).

This sequence belongs to the GroES chaperonin family. In terms of assembly, heptamer of 7 subunits arranged in a ring. Interacts with the chaperonin GroEL.

The protein localises to the cytoplasm. In terms of biological role, together with the chaperonin GroEL, plays an essential role in assisting protein folding. The GroEL-GroES system forms a nano-cage that allows encapsulation of the non-native substrate proteins and provides a physical environment optimized to promote and accelerate protein folding. GroES binds to the apical surface of the GroEL ring, thereby capping the opening of the GroEL channel. In Streptococcus pneumoniae (strain CGSP14), this protein is Co-chaperonin GroES.